The chain runs to 54 residues: U7-myrmicitoxin-Tb1a (54 aa).

The signal sequence occupies residues 1–26 (MQLSHLLLAFAMIFVMTIIHTPQVQA). Positions 27 to 36 (DAMADADADA) are excised as a propeptide. An intrachain disulfide couples C40 to C49.

As to expression, expressed by the venom gland.

It localises to the secreted. In terms of biological role, venom protein with unknown function. Does not induce paralysis when a high dose is administered by intrathoracic injection into the blowfly Lucilia caesar. The chain is U7-myrmicitoxin-Tb1a from Tetramorium bicarinatum (Tramp ant).